The primary structure comprises 227 residues: Guanylate kinase (227 aa).

The 179-residue stretch at 21–199 folds into the Guanylate kinase-like domain; the sequence is GNLFMVVAPS…ALAELECIVA (179 aa). 28–35 provides a ligand contact to ATP; that stretch reads APSGAGKS.

Belongs to the guanylate kinase family.

The protein resides in the cytoplasm. It catalyses the reaction GMP + ATP = GDP + ADP. Its function is as follows. Essential for recycling GMP and indirectly, cGMP. The sequence is that of Guanylate kinase from Burkholderia mallei (strain ATCC 23344).